We begin with the raw amino-acid sequence, 288 residues long: Bifunctional protein FolD (288 aa).

Residues 166–168 (GRS), Ser191, and Val232 each bind NADP(+).

Belongs to the tetrahydrofolate dehydrogenase/cyclohydrolase family. In terms of assembly, homodimer.

The enzyme catalyses (6R)-5,10-methylene-5,6,7,8-tetrahydrofolate + NADP(+) = (6R)-5,10-methenyltetrahydrofolate + NADPH. It catalyses the reaction (6R)-5,10-methenyltetrahydrofolate + H2O = (6R)-10-formyltetrahydrofolate + H(+). It functions in the pathway one-carbon metabolism; tetrahydrofolate interconversion. Functionally, catalyzes the oxidation of 5,10-methylenetetrahydrofolate to 5,10-methenyltetrahydrofolate and then the hydrolysis of 5,10-methenyltetrahydrofolate to 10-formyltetrahydrofolate. In Roseiflexus castenholzii (strain DSM 13941 / HLO8), this protein is Bifunctional protein FolD.